The following is a 394-amino-acid chain: C-19 steroid 1alpha-hydroxylase (394 aa).

Heme b-binding residues include H81, R85, R281, G335, H338, and C340.

Belongs to the cytochrome P450 family. The cofactor is heme b.

The enzyme catalyses testosterone + 2 reduced [2Fe-2S]-[ferredoxin] + O2 + 2 H(+) = 1alpha-hydroxytestosterone + 2 oxidized [2Fe-2S]-[ferredoxin] + H2O. It catalyses the reaction androst-4-ene-3,17-dione + 2 reduced [2Fe-2S]-[ferredoxin] + O2 + 2 H(+) = 1alpha-hydroxyandrost-4-ene-3,17-dione + 2 oxidized [2Fe-2S]-[ferredoxin] + H2O. Hydroxylase that can catalyze the in vitro conversion of the sesquiterpenoid nootkatone, a natural organic compound produced by some plants, to at least five hydrophilic products. The native ferredoxin reductase FdR_B and either Fdx2 or Fdx8 ferredoxins can act as the redox partners for the conversion of nootkatone. Functionally, in addition, acts as a steroid 1alpha-hydroxylase, when associated in vitro with the surrogate redox partners bovine adrenodoxin (Adx) and adrenodoxin reductase (Adr). Acts on several C-19 steroid substrates, including testosterone and androstenedione, which are hydroxylated to 1alpha-hydroxytestosterone and 1alpha-hydroxyandrostenedione, respectively. Can use their derivatives testosterone-acetate and 11-oxoandrostenedione, but not vitamin D3 and 25-hydroxyvitamin D3. Also catalyzes the hydroxylation of the C-21 steroid 11-deoxycorticosterone to 1alpha-hydroxy-11-deoxycorticosterone. Catalyzes the hydroxylation of the C-21 steroid progesterone, leading to the formation of seven products: two major (1alpha-hydroxyprogesterone and 17alpha-hydroxyprogesterone) and five minor products. The sequence is that of C-19 steroid 1alpha-hydroxylase from Sorangium cellulosum (strain So ce56) (Polyangium cellulosum (strain So ce56)).